The primary structure comprises 568 residues: Periplasmic trehalase (568 aa).

The first 39 residues, 1 to 39 (MPYATARSGDVMSSAAPPCCTSLLGLSLSMFVAPGTLTA), serve as a signal peptide directing secretion. Substrate is bound by residues R169, 176–177 (WD), N213, 222–224 (RSQ), 294–296 (RPE), and G327. Residues D329 and E511 each act as proton donor/acceptor in the active site. E526 lines the substrate pocket.

It belongs to the glycosyl hydrolase 37 family.

It localises to the periplasm. It catalyses the reaction alpha,alpha-trehalose + H2O = alpha-D-glucose + beta-D-glucose. Provides the cells with the ability to utilize trehalose at high osmolarity by splitting it into glucose molecules that can subsequently be taken up by the phosphotransferase-mediated uptake system. This chain is Periplasmic trehalase, found in Xanthomonas axonopodis pv. citri (strain 306).